A 956-amino-acid polypeptide reads, in one-letter code: MLPLSTPLLAQLQRVTEHFHQLTLNVEPVAAHEQAILSLSDFVVENLQAHPEWLVEIRQHPPEAQEWHQYTEWLQQLLASVEDENTLMRVLRQFRNKILVRIAWSQALHSITTQETLQQLSMLAETLIIAARDWLYQRCCQDWGTPCNERGEPQPLLIIGMGKLGGGELNFSSDIDLIFVYPENGITQGGRREMDNTQFFTRLGQHLIKVLDQQTVDGFVYRVDMRLRPFGDSGPLVFSFVALEDYYQEQGRDWERYAMVKARIMGSDNQAYGEELRRMLRPFIFRRYIDFSVIQSLRNMKGMIEREVRHRGLKDNIKLGAGGIREIEFIAQVFQLIRGGRELCLQSQALLPTLQIIAKLTLLQSLQVKQLADGYLFLRRLENLLQSINDQQTQTLPEDELNRSRLTWGMGFESWDALIIELNNKMSAVRAIFTQLIGDDSDNSDEEPSHVPFKSLWLEDLEKEELIILAPHLDEEIAQQILHIISVFRHDVGKRTIGPRGRDVLDHLMPRLLAKVCLRQDANNQDVNNRNVNIVLERVIPLLLSIVSRTTYLELILESEAVLAHVIRLCAASPMIATQLACHPLLLDELLDPQFLYEPLPLNAYKDELRQYLLRIPEDDEEQQLEALRQFKQAQLLRIAAEDITGVLPVMKVSDHLTYLAEAIIEAVVLQAWGQMAKRYGVPSHLSQRQGLGFAVIGYGKLGGWELGYGSDLDLVFLLDCPMDVMTDGDRSIDARQFYLRLAQRIMHLFSARTSSGVLYDVDVRLRPSGESGMLVSTIGAFADYQRNQAWTWEHQALVRARMVFGDENLHRDFERIRHQTLCTRREPALLRQQVREMREKMHKHLGSHHSDQFDIKADPGGITDIEFIAQYLVLRYAAENERLVRWSDNVRIFQLMAAYEIMDEDEAAGLTQAYVSMRDELHHLTLQTHSSRVSIHCFSEQQERVRRSWQQWLGE.

Positions 1–441 (MLPLSTPLLA…IFTQLIGDDS (441 aa)) are adenylyl removase. Positions 450–956 (HVPFKSLWLE…RRSWQQWLGE (507 aa)) are adenylyl transferase.

Belongs to the GlnE family. Mg(2+) is required as a cofactor.

It carries out the reaction [glutamine synthetase]-O(4)-(5'-adenylyl)-L-tyrosine + phosphate = [glutamine synthetase]-L-tyrosine + ADP. The enzyme catalyses [glutamine synthetase]-L-tyrosine + ATP = [glutamine synthetase]-O(4)-(5'-adenylyl)-L-tyrosine + diphosphate. Its function is as follows. Involved in the regulation of glutamine synthetase GlnA, a key enzyme in the process to assimilate ammonia. When cellular nitrogen levels are high, the C-terminal adenylyl transferase (AT) inactivates GlnA by covalent transfer of an adenylyl group from ATP to specific tyrosine residue of GlnA, thus reducing its activity. Conversely, when nitrogen levels are low, the N-terminal adenylyl removase (AR) activates GlnA by removing the adenylyl group by phosphorolysis, increasing its activity. The regulatory region of GlnE binds the signal transduction protein PII (GlnB) which indicates the nitrogen status of the cell. The protein is Bifunctional glutamine synthetase adenylyltransferase/adenylyl-removing enzyme of Photorhabdus laumondii subsp. laumondii (strain DSM 15139 / CIP 105565 / TT01) (Photorhabdus luminescens subsp. laumondii).